A 436-amino-acid chain; its full sequence is Xylose isomerase (436 aa).

Active-site residues include His-100 and Asp-103. 7 residues coordinate Mg(2+): Glu-231, Glu-267, His-270, Asp-295, Asp-306, Asp-308, and Asp-338.

Belongs to the xylose isomerase family. Homotetramer. Requires Mg(2+) as cofactor.

The protein localises to the cytoplasm. It carries out the reaction alpha-D-xylose = alpha-D-xylulofuranose. This chain is Xylose isomerase, found in Agrobacterium fabrum (strain C58 / ATCC 33970) (Agrobacterium tumefaciens (strain C58)).